Consider the following 93-residue polypeptide: MIVEVVVMTNIEERINQIIQVLREQVVQDTAVPRNIRRAAEQAIEALQNKEKEPAVRAADAIAILEEISEDPNMPLHTRTIIWEVLGALEQIK.

The protein belongs to the UPF0147 family.

The polypeptide is UPF0147 protein PF0239 (Pyrococcus furiosus (strain ATCC 43587 / DSM 3638 / JCM 8422 / Vc1)).